Here is a 332-residue protein sequence, read N- to C-terminus: Transcription regulatory protein SNF6 (332 aa).

A Nuclear localization signal motif is present at residues 2-8 (GVIKKKR). Thr-165 is subject to Phosphothreonine. The disordered stretch occupies residues 278–299 (VTTVASQSPHATATEKEPVPAV).

As to quaternary structure, component of the SWI/SNF global transcription activator complex. The 1.14 MDa SWI/SNF complex is composed of 11 different subunits: one copy each of SWI1, SNF2/SWI2, SNF5, SNF12/SWP73, ARP7/SWP61, ARP9/SWP59; two copies each of SWI3, SNF6, SNF11, SWP82; and three copies of TAF14/SWP29.

It localises to the nucleus. Involved in transcriptional activation. Component of the SWI/SNF complex, an ATP-dependent chromatin remodeling complex, which is required for the positive and negative regulation of gene expression of a large number of genes. It changes chromatin structure by altering DNA-histone contacts within a nucleosome, leading eventually to a change in nucleosome position, thus facilitating or repressing binding of gene-specific transcription factors. This Saccharomyces cerevisiae (strain ATCC 204508 / S288c) (Baker's yeast) protein is Transcription regulatory protein SNF6 (SNF6).